The primary structure comprises 334 residues: E3 ubiquitin-protein ligase ATL4 (334 aa).

Residues 1 to 20 (MESLINPSHGGGNYDSHSSS) are disordered. Residues 28-48 (VLVIILILLMTLLISVSICFL) traverse the membrane as a helical segment. The RING-type; atypical zinc finger occupies 117–159 (CAVCLSKFEPEDQLRLLPLCCHAFHADCIDIWLVSNQTCPLCR).

It belongs to the RING-type zinc finger family. ATL subfamily.

The protein localises to the membrane. It carries out the reaction S-ubiquitinyl-[E2 ubiquitin-conjugating enzyme]-L-cysteine + [acceptor protein]-L-lysine = [E2 ubiquitin-conjugating enzyme]-L-cysteine + N(6)-ubiquitinyl-[acceptor protein]-L-lysine.. Its pathway is protein modification; protein ubiquitination. Its function is as follows. E3 ubiquitin-protein ligase able to catalyze polyubiquitination with ubiquitin-conjugating enzyme E2 UBC8 in vitro. The protein is E3 ubiquitin-protein ligase ATL4 of Arabidopsis thaliana (Mouse-ear cress).